Reading from the N-terminus, the 465-residue chain is Methionine aminopeptidase 2-2 (465 aa).

The span at 1 to 13 (MGSKTPNDHRRGP) shows a compositional bias: basic and acidic residues. A disordered region spans residues 1–92 (MGSKTPNDHR…KKKTLLGGLQ (92 aa)). The segment covering 44 to 55 (GETEDGEDEDDD) has biased composition (acidic residues). The span at 71 to 86 (TKKKNKRKKNKKKKKT) shows a compositional bias: basic residues. His217 contacts substrate. 3 residues coordinate a divalent metal cation: Asp238, Asp249, and His318. His326 serves as a coordination point for substrate. A divalent metal cation contacts are provided by Glu351 and Glu446.

This sequence belongs to the peptidase M24A family. Methionine aminopeptidase eukaryotic type 2 subfamily. Requires Co(2+) as cofactor. Zn(2+) serves as cofactor. The cofactor is Mn(2+). It depends on Fe(2+) as a cofactor.

The protein localises to the cytoplasm. It catalyses the reaction Release of N-terminal amino acids, preferentially methionine, from peptides and arylamides.. Its function is as follows. Cotranslationally removes the N-terminal methionine from nascent proteins. The N-terminal methionine is often cleaved when the second residue in the primary sequence is small and uncharged (Met-Ala-, Cys, Gly, Pro, Ser, Thr, or Val). In Blastomyces gilchristii (strain SLH14081) (Blastomyces dermatitidis), this protein is Methionine aminopeptidase 2-2.